Reading from the N-terminus, the 334-residue chain is Syntaxin-18 (334 aa).

Topologically, residues 1-308 (MAVDITLLFR…EDIREAIKNN (308 aa)) are cytoplasmic. Disordered regions lie at residues 29–50 (GGAD…GDFS) and 166–225 (LSKL…GEDE). Composition is skewed to basic and acidic residues over residues 33–50 (GSRD…GDFS) and 166–182 (LSKL…DSTS). Residues 183-192 (EKAPQNASQD) show a composition bias toward polar residues. Positions 193 to 207 (SEGKPAAEELPEKPL) are enriched in basic and acidic residues. One can recognise a t-SNARE coiled-coil homology domain in the interval 242–304 (IGEMNSLFDE…KEGNEDIREA (63 aa)). A helical; Anchor for type IV membrane protein transmembrane segment spans residues 309 to 329 (AGFRVWILFFLVMCSFSLLFL). Topologically, residues 330 to 334 (DWYDS) are lumenal.

It belongs to the syntaxin family. As to quaternary structure, component of a SNARE complex consisting of STX18, USE1L, BNIP1/SEC20L, and SEC22B. RINT1/TIP20L and ZW10 are associated with the complex through interaction with BNIP1/SEC20L. Interacts directly with USE1L and BNIP1/SEC20L.

Its subcellular location is the endoplasmic reticulum membrane. The protein localises to the golgi apparatus membrane. In terms of biological role, syntaxin that may be involved in targeting and fusion of Golgi-derived retrograde transport vesicles with the ER. This is Syntaxin-18 (Stx18) from Mus musculus (Mouse).